Here is a 196-residue protein sequence, read N- to C-terminus: Imidazoleglycerol-phosphate dehydratase (196 aa).

This sequence belongs to the imidazoleglycerol-phosphate dehydratase family.

Its subcellular location is the cytoplasm. The enzyme catalyses D-erythro-1-(imidazol-4-yl)glycerol 3-phosphate = 3-(imidazol-4-yl)-2-oxopropyl phosphate + H2O. It functions in the pathway amino-acid biosynthesis; L-histidine biosynthesis; L-histidine from 5-phospho-alpha-D-ribose 1-diphosphate: step 6/9. The protein is Imidazoleglycerol-phosphate dehydratase of Dehalococcoides mccartyi (strain ATCC BAA-2266 / KCTC 15142 / 195) (Dehalococcoides ethenogenes (strain 195)).